Reading from the N-terminus, the 256-residue chain is Deoxyribose-phosphate aldolase (256 aa).

Asp102 serves as the catalytic Proton donor/acceptor. Catalysis depends on Lys165, which acts as the Schiff-base intermediate with acetaldehyde. The active-site Proton donor/acceptor is Lys197.

Belongs to the DeoC/FbaB aldolase family. DeoC type 2 subfamily.

Its subcellular location is the cytoplasm. It carries out the reaction 2-deoxy-D-ribose 5-phosphate = D-glyceraldehyde 3-phosphate + acetaldehyde. It functions in the pathway carbohydrate degradation; 2-deoxy-D-ribose 1-phosphate degradation; D-glyceraldehyde 3-phosphate and acetaldehyde from 2-deoxy-alpha-D-ribose 1-phosphate: step 2/2. Its function is as follows. Catalyzes a reversible aldol reaction between acetaldehyde and D-glyceraldehyde 3-phosphate to generate 2-deoxy-D-ribose 5-phosphate. This Shewanella sp. (strain W3-18-1) protein is Deoxyribose-phosphate aldolase.